Reading from the N-terminus, the 1610-residue chain is NHS-like protein 1 (1610 aa).

Position 24 is a phosphoserine (Ser-24). Residues 145-169 (SPFCDDYQDEDEETDQKCSLSSSEE) are disordered. Phosphoserine occurs at positions 198 and 328. A compositionally biased stretch (polar residues) spans 433–448 (TAQSAGQRESKSSGSS). 2 disordered regions span residues 433–477 (TAQS…HWNE) and 531–602 (PAHP…DAGS). Ser-568 carries the phosphoserine modification. Residues 578–594 (GYSTPTSNMSSCSLDQT) are compositionally biased toward polar residues. Ser-639 carries the phosphoserine modification. Positions 649 to 667 (QKNQGDRSNYQDKSLSRNI) are enriched in polar residues. Disordered regions lie at residues 649–693 (QKNQ…KKSS), 715–778 (SLPG…SVKS), 791–981 (TGMQ…PPPE), 997–1535 (PRPA…GEGE), and 1566–1610 (EGGL…SEES). The span at 715-730 (SLPGKSGSSPSQSPCS) shows a compositional bias: low complexity. Composition is skewed to polar residues over residues 740-760 (SRSQ…TPNV), 767-778 (TPSQSDTSSVKS), and 851-865 (SPSS…TPTA). Residues 895-928 (SLISSVSISSSSTSLSSSTSTEGSGTMKKLDPAV) show a composition bias toward low complexity. Pro residues-rich tracts occupy residues 929-946 (GSPP…PFPC) and 970-981 (PHSPVFPPPPPE). The span at 1001-1011 (LSPILPDSPVS) shows a compositional bias: low complexity. A compositionally biased stretch (pro residues) spans 1012–1031 (LPLPPPLLPSSEPPPAPPLD). A compositionally biased stretch (polar residues) spans 1041 to 1053 (PFTNSGQPESSRG). Ser-1089 is subject to Phosphoserine. The span at 1122 to 1153 (SRNSTNEMESESQPASVTSSLPTPAKSSSQGD) shows a compositional bias: polar residues. Position 1167 is a phosphoserine (Ser-1167). Residues 1180 to 1193 (PSPSTTPLPDSSPS) show a composition bias toward low complexity. Phosphoserine is present on Ser-1233. Composition is skewed to basic and acidic residues over residues 1240 to 1249 (GSVHSREAKE) and 1373 to 1383 (GRRDSDDDHSR). Phosphoserine is present on residues Ser-1386 and Ser-1388. Thr-1392 carries the post-translational modification Phosphothreonine. Residues 1405 to 1422 (QVGSIQRSIRKSSTSSDN) are compositionally biased toward polar residues. Basic and acidic residues predominate over residues 1447 to 1460 (KNTDPRFQRSRSEP). Low complexity-rich tracts occupy residues 1461-1474 (SPDA…CSPS) and 1504-1516 (SRTP…SRYS).

This sequence belongs to the NHS family. Widely expressed. Expressed in adult and fetal brain, fetal eyes, adult lens, kidney, liver and intestine.

The chain is NHS-like protein 1 (NHSL1) from Homo sapiens (Human).